A 237-amino-acid chain; its full sequence is Glucosamine-6-phosphate deaminase (237 aa).

The Proton acceptor; for enolization step role is filled by Asp67. Residue Asn136 is the For ring-opening step of the active site. The Proton acceptor; for ring-opening step role is filled by His138. Glu143 serves as the catalytic For ring-opening step.

The protein belongs to the glucosamine/galactosamine-6-phosphate isomerase family. NagB subfamily.

It carries out the reaction alpha-D-glucosamine 6-phosphate + H2O = beta-D-fructose 6-phosphate + NH4(+). It participates in amino-sugar metabolism; N-acetylneuraminate degradation; D-fructose 6-phosphate from N-acetylneuraminate: step 5/5. Catalyzes the reversible isomerization-deamination of glucosamine 6-phosphate (GlcN6P) to form fructose 6-phosphate (Fru6P) and ammonium ion. This is Glucosamine-6-phosphate deaminase from Lysinibacillus sphaericus (strain C3-41).